The primary structure comprises 938 residues: Isoleucine--tRNA ligase (938 aa).

The 'HIGH' region motif lies at 58 to 68 (PYANGSIHIGH). E561 contributes to the L-isoleucyl-5'-AMP binding site. A 'KMSKS' region motif is present at residues 602–606 (KMSKS). K605 serves as a coordination point for ATP. C901, C904, C921, and C924 together coordinate Zn(2+).

Belongs to the class-I aminoacyl-tRNA synthetase family. IleS type 1 subfamily. As to quaternary structure, monomer. Requires Zn(2+) as cofactor.

Its subcellular location is the cytoplasm. It catalyses the reaction tRNA(Ile) + L-isoleucine + ATP = L-isoleucyl-tRNA(Ile) + AMP + diphosphate. In terms of biological role, catalyzes the attachment of isoleucine to tRNA(Ile). As IleRS can inadvertently accommodate and process structurally similar amino acids such as valine, to avoid such errors it has two additional distinct tRNA(Ile)-dependent editing activities. One activity is designated as 'pretransfer' editing and involves the hydrolysis of activated Val-AMP. The other activity is designated 'posttransfer' editing and involves deacylation of mischarged Val-tRNA(Ile). In Serratia proteamaculans (strain 568), this protein is Isoleucine--tRNA ligase.